The following is a 415-amino-acid chain: MDYKVKDLSLAEQGKKQIEWAEIHMPALMEIRKQFEKEKPLQGLRISAVLHVTKETAVLVKTLKIGGATVALAGSNPLSTQDDVAAALVEEGIRVFAWRGETEKDYYDNIKEILKYEPQIIMDDGGDLHAYVHENMPQLKLFGGTEETTTGVIRLKAMEEQGVLRYPVIAVNNAFTKYLFDNRIGTGQSTIDGILRATNILIAGKVAVVAGYGWVGRGIAQRLRGMGARVIVVEVSPLRALEAVMDGFDVMPMSKAAELGEIFITATGNINVIRKEHILKMKDGAILANSGHFNVEIDVKGLKEMAKSSRLIRPNLEEYELPNGKRIYLLAEGRLVNLAAAEGHPSEVMDLSFSNQALSVKYIYENRGKLENKVYNVPQEIDETVAKLKLNGMGIEIEPMTQEQIEYMKQWRYGT.

Positions 53, 124, and 147 each coordinate substrate. Threonine 148–threonine 150 contacts NAD(+). Substrate contacts are provided by lysine 177 and aspartate 181. Residues asparagine 182, glycine 211 to glycine 216, glutamate 234, asparagine 269, serine 290 to histidine 292, and asparagine 337 contribute to the NAD(+) site.

It belongs to the adenosylhomocysteinase family. The cofactor is NAD(+).

It localises to the cytoplasm. It catalyses the reaction S-adenosyl-L-homocysteine + H2O = L-homocysteine + adenosine. It functions in the pathway amino-acid biosynthesis; L-homocysteine biosynthesis; L-homocysteine from S-adenosyl-L-homocysteine: step 1/1. In terms of biological role, may play a key role in the regulation of the intracellular concentration of adenosylhomocysteine. This Sulfurisphaera tokodaii (strain DSM 16993 / JCM 10545 / NBRC 100140 / 7) (Sulfolobus tokodaii) protein is Adenosylhomocysteinase.